The following is a 1434-amino-acid chain: Probable ATP-dependent RNA helicase spindle-E (1434 aa).

In terms of domain architecture, Helicase ATP-binding spans 125–292 (LAAINAHPVV…FTTTNSIPPV (168 aa)). 138–145 (GETGCGKT) is a binding site for ATP. The DEAH box motif lies at 238-241 (DEVH). A Helicase C-terminal domain is found at 354–526 (QSRQSYDEAL…NSVLKAKVLN (173 aa)). The 64-residue stretch at 938-1001 (ASAIAKGMMV…RLMPRELTEQ (64 aa)) folds into the Tudor domain.

The protein belongs to the DEAD box helicase family. DEAH subfamily.

Its subcellular location is the cytoplasm. It is found in the perinuclear region. It localises to the cytoplasmic ribonucleoprotein granule. The enzyme catalyses ATP + H2O = ADP + phosphate + H(+). Its function is as follows. Probable ATP-binding RNA helicase which plays a central role during spermatogenesis and oogenesis by repressing transposable elements and preventing their mobilization, which is essential for the germline integrity. Acts via the piRNA metabolic process, which mediates the repression of transposable elements during meiosis by forming complexes composed of piRNAs and Piwi and govern the methylation and subsequent repression of transposons. Involved in the repression of LTR retrotransposon copia. Also involved in telomere regulation by repressing specialized telomeric retroelements HeT-A, TAHRE, and TART; Drosophila telomeres being maintained by transposition of specialized telomeric retroelements. Involved in telomeric trans-silencing, a repression mechanism by which a transposon or a transgene inserted in subtelomeric heterochromatin has the capacity to repress in trans in the female germline, a homologous transposon, or transgene located in euchromatin. Involved in the repression of testis-expressed Stellate genes by the homologous Su(Ste) repeats. Required for anteroposterior and dorsoventral axis formation during oogenesis. Key component of the perinuclear meiotic nuage, an electron dense structure involved in the post-transcriptional regulation of transposons and mRNAs; required for recruitment of other nuage comonents including vas, krimp, aub and mael. May have a role in production of piwi-interacting RNA (piRNA). The chain is Probable ATP-dependent RNA helicase spindle-E from Drosophila melanogaster (Fruit fly).